The following is a 246-amino-acid chain: MSGKDRLPIFPSRGAQMLMKARLAGAQKGHGLLKKKADALQMRFRLILGKIIETKTLMGDVMKEAAFSLAEAKFTSGDINQVVLQNVTKAQIKIRTKKDNVAGVTLPVFESYQDGSDTYELAGLARGGQQLAKLKKNYQSAVKLLVELASLQTSFVTLDEVIKITNRRVNAIEHVIIPRIDRTLAYIISELDELEREEFYRLKKIQDKKREARIKADAKKAELLQQGIDVRQQANILDEGDDDVLF.

The protein belongs to the V-ATPase D subunit family. In terms of assembly, V-ATPase is a heteromultimeric enzyme made up of two complexes: the ATP-hydrolytic V1 complex and the proton translocation V0 complex. The V1 complex consists of three catalytic AB heterodimers that form a heterohexamer, three peripheral stalks each consisting of EG heterodimers, one central rotor including subunits D and F, and the regulatory subunits C and H. The proton translocation complex V0 consists of the proton transport subunit a, a ring of proteolipid subunits c9c'', rotary subunit d, subunits e and f, and the accessory subunits VhaAC45 and ATP6AP2.

Functionally, subunit of the V1 complex of vacuolar(H+)-ATPase (V-ATPase), a multisubunit enzyme composed of a peripheral complex (V1) that hydrolyzes ATP and a membrane integral complex (V0) that translocates protons. V-ATPase is responsible for acidifying and maintaining the pH of intracellular compartments and in some cell types, is targeted to the plasma membrane, where it is responsible for acidifying the extracellular environment. The protein is V-type proton ATPase subunit D 1 (Vha36-1) of Drosophila melanogaster (Fruit fly).